A 218-amino-acid polypeptide reads, in one-letter code: Small ribosomal subunit protein uS3 (218 aa).

In terms of domain architecture, KH type-2 spans 38 to 106 (IREFISKRLS…RVHINILEIK (69 aa)).

It belongs to the universal ribosomal protein uS3 family. Part of the 30S ribosomal subunit. Forms a tight complex with proteins S10 and S14.

Its function is as follows. Binds the lower part of the 30S subunit head. Binds mRNA in the 70S ribosome, positioning it for translation. The polypeptide is Small ribosomal subunit protein uS3 (Bacillus velezensis (strain DSM 23117 / BGSC 10A6 / LMG 26770 / FZB42) (Bacillus amyloliquefaciens subsp. plantarum)).